The chain runs to 138 residues: MAEDEDNQQGQGEGLKYLGFVQDAATYAVTTFSNVYLFAKDKSGPLQPGVDIIEGPVKNVAVPLYNRFSYIPNGALKFVDSTVVASVTIIDRSLPPIVKDASIQVVSAIRAAPEAARSLASSLPGQTKILAKVFYGEN.

Position 2 is an N-acetylalanine (alanine 2).

Belongs to the REF/SRPP family. As to quaternary structure, in solution, able to form amyloid fibers and aggregates rich in beta-sheets. Interaction with membrane stabilizes the protein, inhibiting the amyloid state and aggregation. Not glycosylated. In terms of tissue distribution, localized in all laticifer layers.

Its subcellular location is the cytoplasm. May be part of the rubber biosynthesis machinery. Plays a role in rubber elongation. The polypeptide is Rubber elongation factor protein (Hevea brasiliensis (Para rubber tree)).